A 39-amino-acid chain; its full sequence is Photosystem II reaction center protein J (39 aa).

Residues 9–29 form a helical membrane-spanning segment; the sequence is LWLVATVGGMAAITVLGIFIY.

The protein belongs to the PsbJ family. As to quaternary structure, PSII is composed of 1 copy each of membrane proteins PsbA, PsbB, PsbC, PsbD, PsbE, PsbF, PsbH, PsbI, PsbJ, PsbK, PsbL, PsbM, PsbT, PsbX, PsbY, PsbZ, Psb30/Ycf12, at least 3 peripheral proteins of the oxygen-evolving complex and a large number of cofactors. It forms dimeric complexes.

The protein localises to the plastid. The protein resides in the chloroplast thylakoid membrane. Functionally, one of the components of the core complex of photosystem II (PSII). PSII is a light-driven water:plastoquinone oxidoreductase that uses light energy to abstract electrons from H(2)O, generating O(2) and a proton gradient subsequently used for ATP formation. It consists of a core antenna complex that captures photons, and an electron transfer chain that converts photonic excitation into a charge separation. The protein is Photosystem II reaction center protein J of Porphyra purpurea (Red seaweed).